Here is a 513-residue protein sequence, read N- to C-terminus: Calcium-dependent protein kinase 2 (513 aa).

The N-myristoyl glycine moiety is linked to residue Gly2. Residues 72–326 (YIIDEKLGQG…IEEALNHPWI (255 aa)) enclose the Protein kinase domain. Residues 78 to 86 (LGQGTYGCV) and Lys101 contribute to the ATP site. Asp192 acts as the Proton acceptor in catalysis. A J domain autoinhibitory motif motif is present at residues 345 to 353 (NLKNFKKEN). The tract at residues 345 to 380 (NLKNFKKENELKKIALTIIAKHLCDVEINNLRNIFI) is j domain. Residues 354-363 (ELKKIALTII) carry the J domain EF-hand interaction motif motif. EF-hand domains follow at residues 370-405 (VEINNLRNIFIALDVDNSGTLSSQEILDGLKKIGYQ), 406-441 (KIPPDIHQVLRDIDSNASGQIHYTDFLAATIDKQTY), 442-477 (LKKEVCLIPFKFFDIDGNGKISVEELKRIFGRDDIE), and 480-513 (LIDKAIDSLLQEVDLNGDGEIDFHEFMLMMSKKK). Ca(2+)-binding residues include Asp383, Asp385, Ser387, Thr389, and Glu394. Positions 455, 457, 459, 461, 466, 493, 495, 497, 499, and 504 each coordinate Ca(2+).

It belongs to the protein kinase superfamily. Ser/Thr protein kinase family. CDPK subfamily. Monomer. It depends on Mg(2+) as a cofactor. In terms of processing, myristoylated; myristoylation may target it to different subcellular compartments. Autophosphorylated in vitro.

The enzyme catalyses L-seryl-[protein] + ATP = O-phospho-L-seryl-[protein] + ADP + H(+). The catalysed reaction is L-threonyl-[protein] + ATP = O-phospho-L-threonyl-[protein] + ADP + H(+). Activated by calcium. Upon calcium binding to the EF-hand domains, the C-terminus of the junction domain (J domain) undergoes a conformational change which results in the dissociation of the pseudo-substrate inhibitory motif from the catalytic domain. This, in turn, may facilitate the autophosphorylation of the activation loop at Thr-232, which leads to the kinase activation. Calcium-dependent protein kinase which acts as a sensor and effector of intracellular Ca(2+) levels probably in part downstream of cGMP-activated PKG kinase. During male gametogenesis in the mosquito gut, required for male exflagellation, possibly by regulating male gamete exit from the host erythrocytes. Not required for asexual blood stage proliferation. The chain is Calcium-dependent protein kinase 2 from Plasmodium falciparum (isolate K1 / Thailand).